Reading from the N-terminus, the 334-residue chain is Glyceraldehyde-3-phosphate dehydrogenase (334 aa).

NAD(+)-binding positions include 12–13 and Gly111; that span reads TI. 140–142 lines the D-glyceraldehyde 3-phosphate pocket; that stretch reads SCN. The active-site Nucleophile is the Cys141. Residue Arg167 participates in NAD(+) binding. A D-glyceraldehyde 3-phosphate-binding site is contributed by 192 to 193; that stretch reads HG. Gln298 contributes to the NAD(+) binding site.

The protein belongs to the glyceraldehyde-3-phosphate dehydrogenase family. As to quaternary structure, homotetramer.

Its subcellular location is the cytoplasm. It catalyses the reaction D-glyceraldehyde 3-phosphate + phosphate + NADP(+) = (2R)-3-phospho-glyceroyl phosphate + NADPH + H(+). The enzyme catalyses D-glyceraldehyde 3-phosphate + phosphate + NAD(+) = (2R)-3-phospho-glyceroyl phosphate + NADH + H(+). Its pathway is carbohydrate degradation; glycolysis; pyruvate from D-glyceraldehyde 3-phosphate: step 1/5. The polypeptide is Glyceraldehyde-3-phosphate dehydrogenase (Thermococcus sibiricus (strain DSM 12597 / MM 739)).